A 176-amino-acid chain; its full sequence is Inner membrane-spanning protein YciB (176 aa).

Helical transmembrane passes span 3–23, 24–44, 49–69, 81–101, 119–139, and 149–169; these read FLFD…WGIF, TATA…AFRH, TMLW…LVLH, LYWL…NNLI, LNVA…YVVH, and FKLF…SLWL.

It belongs to the YciB family.

It is found in the cell inner membrane. Plays a role in cell envelope biogenesis, maintenance of cell envelope integrity and membrane homeostasis. The sequence is that of Inner membrane-spanning protein YciB from Burkholderia ambifaria (strain MC40-6).